The following is a 526-amino-acid chain: Rho guanine nucleotide exchange factor 3 (526 aa).

Residues 20–40 (ELPPASGPAKDAEEPSNKRVK) form a disordered region. A phosphoserine mark is found at S47 and S70. The DH domain occupies 122–304 (KRQEAIFELS…QGIVAEINTK (183 aa)). Positions 291-449 (INIIQGIVAE…WLNCIRQAKE (159 aa)) constitute a PH domain. The segment at 464–526 (EGSFLNPTTG…GNSRHGESNV (63 aa)) is disordered. Polar residues predominate over residues 466–475 (SFLNPTTGSR).

As to quaternary structure, interacts with RHOA and RHOB.

It localises to the cytoplasm. In terms of biological role, acts as a guanine nucleotide exchange factor (GEF) for RhoA and RhoB GTPases. The protein is Rho guanine nucleotide exchange factor 3 (ARHGEF3) of Pongo abelii (Sumatran orangutan).